Here is a 180-residue protein sequence, read N- to C-terminus: Small ribosomal subunit protein uS5 (180 aa).

Positions M24–V87 constitute an S5 DRBM domain.

The protein belongs to the universal ribosomal protein uS5 family. In terms of assembly, part of the 30S ribosomal subunit. Contacts proteins S4 and S8.

In terms of biological role, with S4 and S12 plays an important role in translational accuracy. Functionally, located at the back of the 30S subunit body where it stabilizes the conformation of the head with respect to the body. The sequence is that of Small ribosomal subunit protein uS5 from Stenotrophomonas maltophilia (strain R551-3).